Reading from the N-terminus, the 124-residue chain is Small ribosomal subunit protein uS12 (124 aa).

At Asp-89 the chain carries 3-methylthioaspartic acid.

Belongs to the universal ribosomal protein uS12 family. In terms of assembly, part of the 30S ribosomal subunit. Contacts proteins S8 and S17. May interact with IF1 in the 30S initiation complex.

Functionally, with S4 and S5 plays an important role in translational accuracy. Interacts with and stabilizes bases of the 16S rRNA that are involved in tRNA selection in the A site and with the mRNA backbone. Located at the interface of the 30S and 50S subunits, it traverses the body of the 30S subunit contacting proteins on the other side and probably holding the rRNA structure together. The combined cluster of proteins S8, S12 and S17 appears to hold together the shoulder and platform of the 30S subunit. This is Small ribosomal subunit protein uS12 from Serratia proteamaculans (strain 568).